A 495-amino-acid polypeptide reads, in one-letter code: Lysine--tRNA ligase (495 aa).

2 residues coordinate Mg(2+): Glu-406 and Glu-413.

This sequence belongs to the class-II aminoacyl-tRNA synthetase family. Homodimer. Mg(2+) is required as a cofactor.

Its subcellular location is the cytoplasm. It carries out the reaction tRNA(Lys) + L-lysine + ATP = L-lysyl-tRNA(Lys) + AMP + diphosphate. This Leptospira borgpetersenii serovar Hardjo-bovis (strain JB197) protein is Lysine--tRNA ligase.